The chain runs to 293 residues: NAD kinase (293 aa).

Asp-72 functions as the Proton acceptor in the catalytic mechanism. NAD(+) is bound by residues 72 to 73 (DG), 146 to 147 (ND), Arg-157, Arg-174, Asp-176, 187 to 192 (TAYALS), and Gln-247.

Belongs to the NAD kinase family. A divalent metal cation is required as a cofactor.

Its subcellular location is the cytoplasm. It carries out the reaction NAD(+) + ATP = ADP + NADP(+) + H(+). Functionally, involved in the regulation of the intracellular balance of NAD and NADP, and is a key enzyme in the biosynthesis of NADP. Catalyzes specifically the phosphorylation on 2'-hydroxyl of the adenosine moiety of NAD to yield NADP. This Chromohalobacter salexigens (strain ATCC BAA-138 / DSM 3043 / CIP 106854 / NCIMB 13768 / 1H11) protein is NAD kinase.